A 448-amino-acid chain; its full sequence is Probable glycine dehydrogenase (decarboxylating) subunit 1 (448 aa).

It belongs to the GcvP family. N-terminal subunit subfamily. In terms of assembly, the glycine cleavage system is composed of four proteins: P, T, L and H. In this organism, the P 'protein' is a heterodimer of two subunits.

The catalysed reaction is N(6)-[(R)-lipoyl]-L-lysyl-[glycine-cleavage complex H protein] + glycine + H(+) = N(6)-[(R)-S(8)-aminomethyldihydrolipoyl]-L-lysyl-[glycine-cleavage complex H protein] + CO2. The glycine cleavage system catalyzes the degradation of glycine. The P protein binds the alpha-amino group of glycine through its pyridoxal phosphate cofactor; CO(2) is released and the remaining methylamine moiety is then transferred to the lipoamide cofactor of the H protein. The polypeptide is Probable glycine dehydrogenase (decarboxylating) subunit 1 (Listeria welshimeri serovar 6b (strain ATCC 35897 / DSM 20650 / CCUG 15529 / CIP 8149 / NCTC 11857 / SLCC 5334 / V8)).